Reading from the N-terminus, the 425-residue chain is Trigger factor (425 aa).

In terms of domain architecture, PPIase FKBP-type spans glycine 158–proline 231.

This sequence belongs to the FKBP-type PPIase family. Tig subfamily.

It localises to the cytoplasm. The catalysed reaction is [protein]-peptidylproline (omega=180) = [protein]-peptidylproline (omega=0). Its function is as follows. Involved in protein export. Acts as a chaperone by maintaining the newly synthesized protein in an open conformation. Functions as a peptidyl-prolyl cis-trans isomerase. The protein is Trigger factor of Thermotoga petrophila (strain ATCC BAA-488 / DSM 13995 / JCM 10881 / RKU-1).